A 477-amino-acid polypeptide reads, in one-letter code: Glycogen synthase (477 aa).

Lysine 15 is a binding site for ADP-alpha-D-glucose.

Belongs to the glycosyltransferase 1 family. Bacterial/plant glycogen synthase subfamily.

The enzyme catalyses [(1-&gt;4)-alpha-D-glucosyl](n) + ADP-alpha-D-glucose = [(1-&gt;4)-alpha-D-glucosyl](n+1) + ADP + H(+). It participates in glycan biosynthesis; glycogen biosynthesis. Synthesizes alpha-1,4-glucan chains using ADP-glucose. This chain is Glycogen synthase, found in Shigella flexneri serotype 5b (strain 8401).